A 512-amino-acid polypeptide reads, in one-letter code: D-alanine--D-alanyl carrier protein ligase (512 aa).

Residue 152–153 (TS) coordinates ATP. D-alanine is bound at residue Asp-199. An ATP-binding site is contributed by 294–299 (NAYGPT). Val-303 provides a ligand contact to D-alanine. ATP-binding positions include Asp-385, 397–400 (YGGR), and Lys-499. A D-alanine-binding site is contributed by Lys-499.

Belongs to the ATP-dependent AMP-binding enzyme family. DltA subfamily.

It localises to the cytoplasm. The enzyme catalyses holo-[D-alanyl-carrier protein] + D-alanine + ATP = D-alanyl-[D-alanyl-carrier protein] + AMP + diphosphate. It functions in the pathway cell wall biogenesis; lipoteichoic acid biosynthesis. Catalyzes the first step in the D-alanylation of lipoteichoic acid (LTA), the activation of D-alanine and its transfer onto the D-alanyl carrier protein (Dcp) DltC. In an ATP-dependent two-step reaction, forms a high energy D-alanyl-AMP intermediate, followed by transfer of the D-alanyl residue as a thiol ester to the phosphopantheinyl prosthetic group of the Dcp. D-alanylation of LTA plays an important role in modulating the properties of the cell wall in Gram-positive bacteria, influencing the net charge of the cell wall. The sequence is that of D-alanine--D-alanyl carrier protein ligase from Streptococcus pyogenes serotype M3 (strain SSI-1).